The following is a 202-amino-acid chain: Neuroligin-3 (202 aa).

Over 1–202 the chain is Extracellular; sequence RYGSPTYFYA…TGTRMQGHSW (202 aa). Cysteines 15 and 49 form a disulfide. N50 is a glycosylation site (N-linked (GlcNAc...) asparagine). A disordered region spans residues 154 to 202; it reads LRIPPTAPTSPAGPMARPGAPSGQPSHLPTATRMPRGPGTGTRMQGHSW.

The protein belongs to the type-B carboxylesterase/lipase family. Homodimer, and heterodimer with NLGN1 and NLGN2. Interacts with neurexins NRXN1, NRXN2 and NRXN3. Interaction with neurexins is mediated by heparan sulfate glycan modification on neurexin. Interacts (via its C-terminus) with DLG4/PSD-95 (via PDZ domain 3).

The protein resides in the cell membrane. It localises to the synapse. Cell surface protein involved in cell-cell-interactions via its interactions with neurexin family members. Plays a role in synapse function and synaptic signal transmission, and probably mediates its effects by recruiting and clustering other synaptic proteins. May promote the initial formation of synapses, but is not essential for this. May also play a role in glia-glia or glia-neuron interactions in the developing peripheral nervous system. This is Neuroligin-3 (NLGN3) from Macaca mulatta (Rhesus macaque).